The following is a 630-amino-acid chain: GTPase-activating protein NEL1 (630 aa).

This sequence belongs to the SEC23/SEC24 family. SEC23 subfamily.

Its subcellular location is the cytoplasm. The protein localises to the nucleus. Acts as a GTPase-activating protein (GAP) for SAR1. Contrary to its SEC23 homolog, NEL1 does not associate with SEC24 and its homologs, nor does it associate with the COPII components, suggesting that it is unlikely that NEL1 functions as a structural component of the vesicle coat machinery. May function as a signaling molecule. This chain is GTPase-activating protein NEL1, found in Saccharomyces cerevisiae (strain ATCC 204508 / S288c) (Baker's yeast).